Consider the following 423-residue polypeptide: Phosphoribosylamine--glycine ligase (423 aa).

The region spanning K107–D314 is the ATP-grasp domain. V133–S194 is an ATP binding site. The Mg(2+) site is built by E284 and N286.

Belongs to the GARS family. It depends on Mg(2+) as a cofactor. Requires Mn(2+) as cofactor.

The enzyme catalyses 5-phospho-beta-D-ribosylamine + glycine + ATP = N(1)-(5-phospho-beta-D-ribosyl)glycinamide + ADP + phosphate + H(+). It participates in purine metabolism; IMP biosynthesis via de novo pathway; N(1)-(5-phospho-D-ribosyl)glycinamide from 5-phospho-alpha-D-ribose 1-diphosphate: step 2/2. The polypeptide is Phosphoribosylamine--glycine ligase (Neisseria meningitidis serogroup A / serotype 4A (strain DSM 15465 / Z2491)).